The sequence spans 188 residues: Putative manganese efflux pump MntP (188 aa).

The next 6 helical transmembrane spans lie at 3 to 23 (LFSLWVMAFGLSMDAFAVSIC), 39 to 59 (AGLYFGLFQAVMPLIGFLLGV), 65 to 85 (ITDYDHWVAFFLLALIGVNML), 110 to 130 (LGFATSIDALAVGVTFAFLSV), 131 to 151 (DIYSSVVTIGLITAALSIIGV), and 167 to 187 (ILGGLILIGLGVKILMEHTLF).

This sequence belongs to the MntP (TC 9.B.29) family.

The protein localises to the cell inner membrane. Functionally, probably functions as a manganese efflux pump. In Mannheimia succiniciproducens (strain KCTC 0769BP / MBEL55E), this protein is Putative manganese efflux pump MntP.